A 420-amino-acid chain; its full sequence is Trophoblast glycoprotein (420 aa).

An N-terminal signal peptide occupies residues 1–34; sequence MPGGCSRGPAAGDGRLRLARLALVLLGWVSSSSS. At 35–355 the chain is on the extracellular side; it reads TSSASSSSSS…PILPPSLQTS (321 aa). The 39-residue stretch at 53 to 91 folds into the LRRNT domain; that stretch reads SAQPPLPDQCPALCECSEAARTVKCVNRNLTEVPTDLPL. 2 disulfides stabilise this stretch: Cys-62/Cys-68 and Cys-66/Cys-77. Asn-81 carries an N-linked (GlcNAc...) asparagine glycan. 7 LRR repeats span residues 92–113, 116–139, 141–163, 172–204, 209–232, 233–255, and 256–275; these read YVRN…AFAR, PLAE…GAFE, LPSL…FAFS, PSPL…AALV, LQGL…VLAQ, LPSL…VSFR, and NLTH…VLHN. An N-linked (GlcNAc...) asparagine glycan is attached at Asn-124. Asn-275 carries an N-linked (GlcNAc...) asparagine glycan. The 64-residue stretch at 283-346 folds into the LRRCT domain; sequence GLPHVRVFLD…LNSADLDCDP (64 aa). 2 disulfides stabilise this stretch: Cys-298–Cys-323 and Cys-300–Cys-344. The helical transmembrane segment at 356–376 threads the bilayer; sequence YVFLGIVLALIGAIFLLVLYL. Over 377-420 the chain is Cytoplasmic; the sequence is NRKGIKKWMHNIRDACRDHMEGYHYRYEINADPRLTNLSSNSDV. Ser-418 is subject to Phosphoserine.

Highly glycosylated.

It is found in the cell membrane. May function as an inhibitor of Wnt/beta-catenin signaling by indirectly interacting with LRP6 and blocking Wnt3a-dependent LRP6 internalization. This chain is Trophoblast glycoprotein (TPBG), found in Macaca fascicularis (Crab-eating macaque).